Consider the following 443-residue polypeptide: Protoheme IX farnesyltransferase, mitochondrial (443 aa).

7 helical membrane-spanning segments follow: residues 174–194, 235–255, 257–277, 280–300, 309–329, 364–384, and 411–431; these read AAGF…LTSV, LAVS…TLGV, PLTG…YTPL, ISIA…VMGW, AGAF…FNAL, LLVL…FPIM, and LFFC…TCKR.

The protein belongs to the UbiA prenyltransferase family.

It is found in the mitochondrion membrane. The catalysed reaction is heme b + (2E,6E)-farnesyl diphosphate + H2O = Fe(II)-heme o + diphosphate. In terms of biological role, converts protoheme IX and farnesyl diphosphate to heme O. The polypeptide is Protoheme IX farnesyltransferase, mitochondrial (COX10) (Homo sapiens (Human)).